The following is a 296-amino-acid chain: 4-diphosphocytidyl-2-C-methyl-D-erythritol kinase (296 aa).

Residue Lys22 is part of the active site. 105–115 lines the ATP pocket; it reads PMGGGLGGGSS. Asp147 is a catalytic residue.

It belongs to the GHMP kinase family. IspE subfamily.

The catalysed reaction is 4-CDP-2-C-methyl-D-erythritol + ATP = 4-CDP-2-C-methyl-D-erythritol 2-phosphate + ADP + H(+). It functions in the pathway isoprenoid biosynthesis; isopentenyl diphosphate biosynthesis via DXP pathway; isopentenyl diphosphate from 1-deoxy-D-xylulose 5-phosphate: step 3/6. Functionally, catalyzes the phosphorylation of the position 2 hydroxy group of 4-diphosphocytidyl-2C-methyl-D-erythritol. In Photobacterium profundum (strain SS9), this protein is 4-diphosphocytidyl-2-C-methyl-D-erythritol kinase.